The chain runs to 612 residues: Glutamine--fructose-6-phosphate aminotransferase [isomerizing] (612 aa).

The Nucleophile; for GATase activity role is filled by Cys-2. One can recognise a Glutamine amidotransferase type-2 domain in the interval 2–220; that stretch reads CGIVGAIRAH…DGDIALLASD (219 aa). SIS domains follow at residues 288–428 and 461–602; these read AKSV…VRGL and WAQQ…VDKP. Lys-607 serves as the catalytic For Fru-6P isomerization activity.

As to quaternary structure, homodimer.

The protein resides in the cytoplasm. It catalyses the reaction D-fructose 6-phosphate + L-glutamine = D-glucosamine 6-phosphate + L-glutamate. Catalyzes the first step in hexosamine metabolism, converting fructose-6P into glucosamine-6P using glutamine as a nitrogen source. This is Glutamine--fructose-6-phosphate aminotransferase [isomerizing] from Neisseria meningitidis serogroup A / serotype 4A (strain DSM 15465 / Z2491).